The chain runs to 301 residues: Protoheme IX farnesyltransferase (301 aa).

9 helical membrane-spanning segments follow: residues 16-36, 41-61, 93-113, 114-134, 141-161, 172-192, 217-237, 238-258, and 273-293; these read VVAL…PGIP, IQSG…AAAI, VFAG…VNLI, TAVL…VYLK, IVIG…AVTG, SLLV…LAIF, QILL…ATGM, SGVF…WYAW, and FGYS…DHWL.

Belongs to the UbiA prenyltransferase family. Protoheme IX farnesyltransferase subfamily.

It localises to the cell inner membrane. It carries out the reaction heme b + (2E,6E)-farnesyl diphosphate + H2O = Fe(II)-heme o + diphosphate. It participates in porphyrin-containing compound metabolism; heme O biosynthesis; heme O from protoheme: step 1/1. In terms of biological role, converts heme B (protoheme IX) to heme O by substitution of the vinyl group on carbon 2 of heme B porphyrin ring with a hydroxyethyl farnesyl side group. The sequence is that of Protoheme IX farnesyltransferase from Xylella fastidiosa (strain 9a5c).